Reading from the N-terminus, the 309-residue chain is Small ribosomal subunit protein uS7m (309 aa).

Positions 39-86 (DSTTSSRLPPRVQIQQQQQQRTQPYSTETTPPPNSNNGDLAGIEGQPP) are disordered. Low complexity predominate over residues 51 to 61 (QIQQQQQQRTQ).

This sequence belongs to the universal ribosomal protein uS7 family. As to quaternary structure, component of the mitochondrial small ribosomal subunit (mt-SSU). Mature N.crassa 74S mitochondrial ribosomes consist of a small (37S) and a large (54S) subunit. The 37S small subunit contains a 16S ribosomal RNA (16S mt-rRNA) and 32 different proteins. The 54S large subunit contains a 23S rRNA (23S mt-rRNA) and 42 different proteins.

It is found in the mitochondrion. In terms of biological role, component of the mitochondrial ribosome (mitoribosome), a dedicated translation machinery responsible for the synthesis of mitochondrial genome-encoded proteins, including at least some of the essential transmembrane subunits of the mitochondrial respiratory chain. The mitoribosomes are attached to the mitochondrial inner membrane and translation products are cotranslationally integrated into the membrane. This Neurospora crassa (strain ATCC 24698 / 74-OR23-1A / CBS 708.71 / DSM 1257 / FGSC 987) protein is Small ribosomal subunit protein uS7m (rsm7).